Reading from the N-terminus, the 679-residue chain is Glycine--tRNA ligase beta subunit (679 aa).

The protein belongs to the class-II aminoacyl-tRNA synthetase family. As to quaternary structure, tetramer of two alpha and two beta subunits.

It is found in the cytoplasm. It carries out the reaction tRNA(Gly) + glycine + ATP = glycyl-tRNA(Gly) + AMP + diphosphate. In Streptococcus mutans serotype c (strain ATCC 700610 / UA159), this protein is Glycine--tRNA ligase beta subunit.